Here is a 317-residue protein sequence, read N- to C-terminus: Acetyl-coenzyme A carboxylase carboxyl transferase subunit beta (317 aa).

A CoA carboxyltransferase N-terminal domain is found at 30-299 (LWTKCVACTA…VLPPLNVREK (270 aa)). Residues cysteine 34, cysteine 37, cysteine 53, and cysteine 56 each contribute to the Zn(2+) site. The C4-type zinc finger occupies 34-56 (CVACTALTYTKDLQANQLVCTEC).

It belongs to the AccD/PCCB family. As to quaternary structure, acetyl-CoA carboxylase is a heterohexamer composed of biotin carboxyl carrier protein (AccB), biotin carboxylase (AccC) and two subunits each of ACCase subunit alpha (AccA) and ACCase subunit beta (AccD). Zn(2+) serves as cofactor.

It is found in the cytoplasm. The catalysed reaction is N(6)-carboxybiotinyl-L-lysyl-[protein] + acetyl-CoA = N(6)-biotinyl-L-lysyl-[protein] + malonyl-CoA. Its pathway is lipid metabolism; malonyl-CoA biosynthesis; malonyl-CoA from acetyl-CoA: step 1/1. Functionally, component of the acetyl coenzyme A carboxylase (ACC) complex. Biotin carboxylase (BC) catalyzes the carboxylation of biotin on its carrier protein (BCCP) and then the CO(2) group is transferred by the transcarboxylase to acetyl-CoA to form malonyl-CoA. In Crocosphaera subtropica (strain ATCC 51142 / BH68) (Cyanothece sp. (strain ATCC 51142)), this protein is Acetyl-coenzyme A carboxylase carboxyl transferase subunit beta.